A 466-amino-acid chain; its full sequence is ATP synthase subunit beta (466 aa).

Residue 148 to 155 coordinates ATP; the sequence is GGAGVGKT.

It belongs to the ATPase alpha/beta chains family. As to quaternary structure, F-type ATPases have 2 components, CF(1) - the catalytic core - and CF(0) - the membrane proton channel. CF(1) has five subunits: alpha(3), beta(3), gamma(1), delta(1), epsilon(1). CF(0) has three main subunits: a(1), b(2) and c(9-12). The alpha and beta chains form an alternating ring which encloses part of the gamma chain. CF(1) is attached to CF(0) by a central stalk formed by the gamma and epsilon chains, while a peripheral stalk is formed by the delta and b chains.

The protein resides in the cell inner membrane. It catalyses the reaction ATP + H2O + 4 H(+)(in) = ADP + phosphate + 5 H(+)(out). Functionally, produces ATP from ADP in the presence of a proton gradient across the membrane. The catalytic sites are hosted primarily by the beta subunits. This Xylella fastidiosa (strain M12) protein is ATP synthase subunit beta.